The following is a 297-amino-acid chain: 3-mercaptopyruvate sulfurtransferase (297 aa).

N-acetylalanine is present on Ala2. Residues 25-144 (SSQPLKLLDA…WLNQNLPISS (120 aa)) form the Rhodanese 1 domain. Ser35 is subject to Phosphoserine. Lys40 is modified (N6-acetyllysine; alternate). Lys40 carries the post-translational modification N6-succinyllysine; alternate. Residues 145 to 160 (GKSHSEPAEFSAQLDP) are hinge. An N6-succinyllysine mark is found at Lys146 and Lys164. The region spanning 174-288 (DARRFQVVDA…WYMRAQPEHI (115 aa)) is the Rhodanese 2 domain. Substrate is bound at residue Arg188. The active-site Cysteine persulfide intermediate is the Cys248.

As to quaternary structure, monomer (active form). Homodimer; disulfide-linked (inactive form). Expressed in the brain and retina. In the retina, localized to the inner and outer plexiform layer, the inner and outer nuclear layer and the outer segments of photoreceptors. In the brain, localized to neurons of mitral cell layers, glomerular, and external plexiform layers in the olfactory bulb. Also found in Purkinje cell stomata and proximal dendrites. In the spinal cord, localized to large neurons. In the cerebral cortex, localized to pyramidial neurons in layers II/III and V, and in layers I-VI of neocortical areas. In the hippocampus, found in CA1 and CA3 pyramidal cells.

The protein resides in the cytoplasm. Its subcellular location is the mitochondrion. It is found in the synapse. The protein localises to the synaptosome. It catalyses the reaction 2-oxo-3-sulfanylpropanoate + [thioredoxin]-dithiol = [thioredoxin]-disulfide + hydrogen sulfide + pyruvate + H(+). By oxidative stress, and thioredoxin. Under oxidative stress conditions, the catalytic cysteine site is converted to a sulfenate which inhibits the MPST enzyme activity. Reduced thioredoxin cleaves an intersubunit disulfide bond to turn on the redox switch and reactivate the enzyme. Inhibited by different oxidants, hydrogen peroxide and tetrathionate. Transfer of a sulfur ion to cyanide or to other thiol compounds. Also has weak rhodanese activity. Detoxifies cyanide and is required for thiosulfate biosynthesis. Acts as an antioxidant. In combination with cysteine aminotransferase (CAT), contributes to the catabolism of cysteine and is an important producer of hydrogen sulfide in the brain, retina and vascular endothelial cells. Hydrogen sulfide H(2)S is an important synaptic modulator, signaling molecule, smooth muscle contractor and neuroprotectant. Its production by the 3MST/CAT pathway is regulated by calcium ions. In Mus musculus (Mouse), this protein is 3-mercaptopyruvate sulfurtransferase (Mpst).